A 323-amino-acid polypeptide reads, in one-letter code: Phosphate acetyltransferase (323 aa).

This sequence belongs to the phosphate acetyltransferase and butyryltransferase family.

It localises to the cytoplasm. It catalyses the reaction acetyl-CoA + phosphate = acetyl phosphate + CoA. Its pathway is metabolic intermediate biosynthesis; acetyl-CoA biosynthesis; acetyl-CoA from acetate: step 2/2. The protein is Phosphate acetyltransferase (pta) of Bacillus subtilis (strain 168).